Consider the following 95-residue polypeptide: Small ribosomal subunit protein bS6 (95 aa).

This sequence belongs to the bacterial ribosomal protein bS6 family.

Binds together with bS18 to 16S ribosomal RNA. The polypeptide is Small ribosomal subunit protein bS6 (Clostridium beijerinckii (strain ATCC 51743 / NCIMB 8052) (Clostridium acetobutylicum)).